Consider the following 178-residue polypeptide: Ribosomal RNA small subunit methyltransferase G (178 aa).

Residues glycine 54, leucine 59, 105–106, and arginine 120 each bind S-adenosyl-L-methionine; that span reads LE.

It belongs to the methyltransferase superfamily. RNA methyltransferase RsmG family.

It localises to the cytoplasm. The catalysed reaction is guanosine(527) in 16S rRNA + S-adenosyl-L-methionine = N(7)-methylguanosine(527) in 16S rRNA + S-adenosyl-L-homocysteine. Functionally, specifically methylates the N7 position of guanine in position 527 of 16S rRNA. The protein is Ribosomal RNA small subunit methyltransferase G of Helicobacter acinonychis (strain Sheeba).